A 1061-amino-acid chain; its full sequence is Calcium-transporting ATPase 4, endoplasmic reticulum-type (1061 aa).

A disordered region spans residues 1–21 (MGKGGEDCGNKQTNSSELVKS). Residues 1 to 70 (MGKGGEDCGN…NELEKPEGTS (70 aa)) lie on the Cytoplasmic side of the membrane. A helical transmembrane segment spans residues 71–91 (IFKLILEQFNDTLVRILLAAA). Topologically, residues 92–115 (VISFVLAFFDGDEGGEMGITAFVE) are lumenal. The chain crosses the membrane as a helical span at residues 116-135 (PLVIFLILIVNAIVGIWQET). At 136 to 278 (NAEKALEALK…EEDTPLKKKL (143 aa)) the chain is on the cytoplasmic side. The chain crosses the membrane as a helical span at residues 279-298 (NEFGEVLTMIIGLICALVWL). Residues 299 to 327 (INVKYFLSWEYVDGWPRNFKFSFEKCTYY) lie on the Lumenal side of the membrane. Residues 328–345 (FEIAVALAVAAIPEGLPA) traverse the membrane as a helical segment. The Ca(2+) site is built by Val-336, Ala-337, Ile-339, and Glu-341. The Cytoplasmic portion of the chain corresponds to 346–786 (VITTCLALGT…GEGRSIYNNM (441 aa)). Asp-383 acts as the 4-aspartylphosphate intermediate in catalysis. Mg(2+) contacts are provided by Asp-731 and Asp-735. A helical transmembrane segment spans residues 787 to 806 (KAFIRYMISSNIGEVASIFL). Asn-797 and Glu-800 together coordinate Ca(2+). The Lumenal portion of the chain corresponds to 807-816 (TAALGIPEGM). The chain crosses the membrane as a helical span at residues 817-837 (IPVQLLWVNLVTDGPPATALG). The Ca(2+) site is built by Asn-825, Thr-828, and Asp-829. The Cytoplasmic portion of the chain corresponds to 838–857 (FNPPDKDIMKKPPRRSDDSL). Residues 858 to 880 (ITAWILFRYMVIGLYVGVATVGV) form a helical membrane-spanning segment. The Lumenal portion of the chain corresponds to 881–950 (FIIWYTHNSF…YFQQGKIKAS (70 aa)). The chain crosses the membrane as a helical span at residues 951–970 (TLSLSVLVAIEMFNSLNALS). Glu-961 contributes to the Ca(2+) binding site. The Cytoplasmic portion of the chain corresponds to 971–983 (EDGSLVTMPPWVN). A helical membrane pass occupies residues 984 to 1002 (PWLLLAMAVSFGLHFVILY). Over 1003–1017 (VPFLAQVFGIVPLSL) the chain is Lumenal. Residues 1018 to 1038 (NEWLLVLAVSLPVILIDEVLK) form a helical membrane-spanning segment. At 1039–1061 (FVGRCTSGYRYSPRTPSAKQKEE) the chain is on the cytoplasmic side.

Belongs to the cation transport ATPase (P-type) (TC 3.A.3) family. Type IIA subfamily.

The protein resides in the membrane. It catalyses the reaction Ca(2+)(in) + ATP + H2O = Ca(2+)(out) + ADP + phosphate + H(+). In terms of biological role, this magnesium-dependent enzyme catalyzes the hydrolysis of ATP coupled with the translocation of calcium from the cytosol to an endomembrane compartment. This is Calcium-transporting ATPase 4, endoplasmic reticulum-type (ECA4) from Arabidopsis thaliana (Mouse-ear cress).